The chain runs to 264 residues: Virulence plasmid protein pGP3-D (264 aa).

This is Virulence plasmid protein pGP3-D from Chlamydia trachomatis serovar L2 (strain ATCC VR-902B / DSM 19102 / 434/Bu).